Here is a 299-residue protein sequence, read N- to C-terminus: Bifunctional protein FolD (299 aa).

Residues 179-181 and Ile-245 each bind NADP(+); that span reads GPG.

Belongs to the tetrahydrofolate dehydrogenase/cyclohydrolase family. In terms of assembly, homodimer.

It catalyses the reaction (6R)-5,10-methylene-5,6,7,8-tetrahydrofolate + NADP(+) = (6R)-5,10-methenyltetrahydrofolate + NADPH. It carries out the reaction (6R)-5,10-methenyltetrahydrofolate + H2O = (6R)-10-formyltetrahydrofolate + H(+). It participates in one-carbon metabolism; tetrahydrofolate interconversion. Functionally, catalyzes the oxidation of 5,10-methylenetetrahydrofolate to 5,10-methenyltetrahydrofolate and then the hydrolysis of 5,10-methenyltetrahydrofolate to 10-formyltetrahydrofolate. The sequence is that of Bifunctional protein FolD from Deinococcus radiodurans (strain ATCC 13939 / DSM 20539 / JCM 16871 / CCUG 27074 / LMG 4051 / NBRC 15346 / NCIMB 9279 / VKM B-1422 / R1).